A 147-amino-acid polypeptide reads, in one-letter code: MSNFTAEDKAAITSLWGKVNVEDAGGETLGRLLVVYPWTQRFFDSFGSLSSPSAIMGNPKVKAHGVKVLTSLGEAIKNLDDLKGTFGQLSELHCDKLHVDPENFRLLGNVLVTVLAILHGKEFTPEVQASWQKMVAGVASALASRYH.

The Globin domain maps to 3-147; that stretch reads NFTAEDKAAI…VASALASRYH (145 aa). 2 residues coordinate heme b: His-64 and His-93.

Belongs to the globin family. As to quaternary structure, heterotetramer of two alpha chains and two gamma chains in fetal hemoglobin (Hb F). As to expression, red blood cells.

Its function is as follows. Gamma chains make up the fetal hemoglobin F, in combination with alpha chains. The protein is Hemoglobin subunit gamma (HBG) of Lagothrix lagotricha (Brown woolly monkey).